Consider the following 307-residue polypeptide: Myeloid-associated differentiation marker-like protein 2 (307 aa).

2 consecutive MARVEL domains span residues 17-154 and 159-303; these read AVTS…ARPG and YMAT…RIRF. Transmembrane regions (helical) follow at residues 53 to 73, 90 to 110, 129 to 149, 163 to 183, 198 to 218, 232 to 252, and 278 to 298; these read FCMA…ACEF, AFAM…PLYF, LAAS…VALT, VSGL…GALV, VAVY…SVMG, IVYT…WPVF, and LVVA…LAYS.

Belongs to the MAL family.

It localises to the membrane. The polypeptide is Myeloid-associated differentiation marker-like protein 2 (Myadml2) (Mus musculus (Mouse)).